Here is a 250-residue protein sequence, read N- to C-terminus: Hydroxyacylglutathione hydrolase (250 aa).

Zn(2+)-binding residues include His-52, His-54, Asp-56, His-57, His-107, Asp-128, and His-166.

This sequence belongs to the metallo-beta-lactamase superfamily. Glyoxalase II family. Monomer. Requires Zn(2+) as cofactor.

It catalyses the reaction an S-(2-hydroxyacyl)glutathione + H2O = a 2-hydroxy carboxylate + glutathione + H(+). It participates in secondary metabolite metabolism; methylglyoxal degradation; (R)-lactate from methylglyoxal: step 2/2. Thiolesterase that catalyzes the hydrolysis of S-D-lactoyl-glutathione to form glutathione and D-lactic acid. This chain is Hydroxyacylglutathione hydrolase, found in Neisseria gonorrhoeae (strain NCCP11945).